Reading from the N-terminus, the 252-residue chain is D-aminoacyl-tRNA deacylase (252 aa).

Belongs to the DtdA deacylase family. In terms of assembly, monomer. The cofactor is Zn(2+).

The catalysed reaction is a D-aminoacyl-tRNA + H2O = a tRNA + a D-alpha-amino acid + H(+). It carries out the reaction glycyl-tRNA(Ala) + H2O = tRNA(Ala) + glycine + H(+). D-aminoacyl-tRNA deacylase with broad substrate specificity. By recycling D-aminoacyl-tRNA to D-amino acids and free tRNA molecules, this enzyme counteracts the toxicity associated with the formation of D-aminoacyl-tRNA entities in vivo. The chain is D-aminoacyl-tRNA deacylase from Pyrobaculum neutrophilum (strain DSM 2338 / JCM 9278 / NBRC 100436 / V24Sta) (Thermoproteus neutrophilus).